The sequence spans 113 residues: MMKRLVVLRRREPAVRFSCCGVRYGECRRNHAASTGGHAVDGCREFIAAEDGGGGNSTSAVGVAAAALKCAACGCHRSFHRRVQVYEVAWDDDCASGDTSSSSPSSSSSLSSE.

A ZF-HD dimerization-type; degenerate zinc finger spans residues 24-83 (YGECRRNHAASTGGHAVDGCREFIAAEDGGGGNSTSAVGVAAAALKCAACGCHRSFHRRV). The disordered stretch occupies residues 93–113 (DCASGDTSSSSPSSSSSLSSE). Positions 100-113 (SSSSPSSSSSLSSE) are enriched in low complexity.

In terms of assembly, homo- and heterodimers.

Its subcellular location is the cytoplasm. Inhibits zinc finger homeodomain (ZHD) transcription factors, by interacting with them to prevent both their nuclear localization and their DNA-binding properties. This chain is Mini zinc finger protein 2 (MIF3), found in Oryza sativa subsp. japonica (Rice).